Here is a 759-residue protein sequence, read N- to C-terminus: DNA replication licensing factor mcm-5 (759 aa).

The MCM domain maps to 330–536 (AYELIAKSIA…KDATLAKHVI (207 aa)). Residue Arg-370 participates in ADP binding. Positions 511–514 (SRFD) match the Arginine finger motif.

Belongs to the MCM family. As to quaternary structure, component of the mcm2-7 complex. The complex forms a toroidal hexameric ring with the proposed subunit order mcm2-mcm6-mcm4-mcm7-mcm3-mcm5 (By simililarity).

The protein localises to the nucleus. It is found in the cytoplasm. The protein resides in the cytosol. It catalyses the reaction ATP + H2O = ADP + phosphate + H(+). Its function is as follows. Acts as a component of the MCM2-7 complex (MCM complex) which is the replicative helicase essential for 'once per cell cycle' DNA replication initiation and elongation in eukaryotic cells. Core component of CDC45-MCM-GINS (CMG) helicase, the molecular machine that unwinds template DNA during replication, and around which the replisome is built. The active ATPase sites in the MCM2-7 ring are formed through the interaction surfaces of two neighboring subunits such that a critical structure of a conserved arginine finger motif is provided in trans relative to the ATP-binding site of the Walker A box of the adjacent subunit. The six ATPase active sites, however, are likely to contribute differentially to the complex helicase activity. The sequence is that of DNA replication licensing factor mcm-5 (mcm-5) from Caenorhabditis elegans.